The chain runs to 598 residues: (-)-endo-fenchol synthase, chloroplastic (598 aa).

The N-terminal 34 residues, 1–34 (MWSTISISMNVAILKKPLNFLHNSNNKASNPRCV), are a transit peptide targeting the chloroplast. The Mg(2+) site is built by aspartate 351, aspartate 355, aspartate 495, threonine 499, and glutamate 503. Positions 351–355 (DDVYD) match the DDXXD motif motif.

It belongs to the terpene synthase family. Mg(2+) is required as a cofactor. The cofactor is Mn(2+).

The protein resides in the plastid. Its subcellular location is the chloroplast. It carries out the reaction (2E)-geranyl diphosphate + H2O = (1S,2S,4R)-endo-fenchol + diphosphate. It participates in secondary metabolite biosynthesis; terpenoid biosynthesis. Monoterpene synthase that catalyzes the formation of fenchol from geranyl diphosphate. The sequence is that of (-)-endo-fenchol synthase, chloroplastic (FES) from Ocimum basilicum (Sweet basil).